The primary structure comprises 39 residues: Non-specific lipid-transfer protein (39 aa).

It belongs to the plant LTP family.

Its function is as follows. Plant non-specific lipid-transfer proteins transfer phospholipids as well as galactolipids across membranes. May play a role in wax or cutin deposition in the cell walls of expanding epidermal cells and certain secretory tissues. In Musa acuminata (Banana), this protein is Non-specific lipid-transfer protein.